The chain runs to 324 residues: N-acetyl-gamma-glutamyl-phosphate reductase (324 aa).

The active site involves cysteine 131.

Belongs to the NAGSA dehydrogenase family. Type 1 subfamily.

Its subcellular location is the cytoplasm. It carries out the reaction N-acetyl-L-glutamate 5-semialdehyde + phosphate + NADP(+) = N-acetyl-L-glutamyl 5-phosphate + NADPH + H(+). It functions in the pathway amino-acid biosynthesis; L-arginine biosynthesis; N(2)-acetyl-L-ornithine from L-glutamate: step 3/4. Functionally, catalyzes the NADPH-dependent reduction of N-acetyl-5-glutamyl phosphate to yield N-acetyl-L-glutamate 5-semialdehyde. The chain is N-acetyl-gamma-glutamyl-phosphate reductase from Bradyrhizobium sp. (strain BTAi1 / ATCC BAA-1182).